We begin with the raw amino-acid sequence, 482 residues long: ATP synthase subunit beta (482 aa).

161–168 (GGAGVGKT) provides a ligand contact to ATP.

The protein belongs to the ATPase alpha/beta chains family. As to quaternary structure, F-type ATPases have 2 components, CF(1) - the catalytic core - and CF(0) - the membrane proton channel. CF(1) has five subunits: alpha(3), beta(3), gamma(1), delta(1), epsilon(1). CF(0) has three main subunits: a(1), b(2) and c(9-12). The alpha and beta chains form an alternating ring which encloses part of the gamma chain. CF(1) is attached to CF(0) by a central stalk formed by the gamma and epsilon chains, while a peripheral stalk is formed by the delta and b chains.

The protein resides in the cell inner membrane. The enzyme catalyses ATP + H2O + 4 H(+)(in) = ADP + phosphate + 5 H(+)(out). In terms of biological role, produces ATP from ADP in the presence of a proton gradient across the membrane. The catalytic sites are hosted primarily by the beta subunits. The chain is ATP synthase subunit beta from Anaeromyxobacter dehalogenans (strain 2CP-C).